The chain runs to 504 residues: D-alanine--D-alanyl carrier protein ligase (504 aa).

152 to 153 (TS) lines the ATP pocket. Asp197 provides a ligand contact to D-alanine. Position 292–297 (292–297 (NTYGPT)) interacts with ATP. Val301 provides a ligand contact to D-alanine. Residues Asp383, 394 to 397 (YNGR), and Lys492 each bind ATP. Lys492 lines the D-alanine pocket.

This sequence belongs to the ATP-dependent AMP-binding enzyme family. DltA subfamily.

It is found in the cytoplasm. It catalyses the reaction holo-[D-alanyl-carrier protein] + D-alanine + ATP = D-alanyl-[D-alanyl-carrier protein] + AMP + diphosphate. It participates in cell wall biogenesis; lipoteichoic acid biosynthesis. In terms of biological role, catalyzes the first step in the D-alanylation of lipoteichoic acid (LTA), the activation of D-alanine and its transfer onto the D-alanyl carrier protein (Dcp) DltC. In an ATP-dependent two-step reaction, forms a high energy D-alanyl-AMP intermediate, followed by transfer of the D-alanyl residue as a thiol ester to the phosphopantheinyl prosthetic group of the Dcp. D-alanylation of LTA plays an important role in modulating the properties of the cell wall in Gram-positive bacteria, influencing the net charge of the cell wall. The polypeptide is D-alanine--D-alanyl carrier protein ligase (Bacillus cereus (strain AH187)).